A 246-amino-acid polypeptide reads, in one-letter code: Adenosylcobinamide-GDP ribazoletransferase (246 aa).

Transmembrane regions (helical) follow at residues 34–54, 59–79, 113–133, 138–158, 171–191, and 194–214; these read IVTF…VALL, CGVP…TGGF, GGLA…ELLL, PIAA…LLMY, LFIG…GVAL, and VLLG…IWGL.

It belongs to the CobS family. Requires Mg(2+) as cofactor.

The protein resides in the cell inner membrane. The catalysed reaction is alpha-ribazole + adenosylcob(III)inamide-GDP = adenosylcob(III)alamin + GMP + H(+). The enzyme catalyses alpha-ribazole 5'-phosphate + adenosylcob(III)inamide-GDP = adenosylcob(III)alamin 5'-phosphate + GMP + H(+). It functions in the pathway cofactor biosynthesis; adenosylcobalamin biosynthesis; adenosylcobalamin from cob(II)yrinate a,c-diamide: step 7/7. In terms of biological role, joins adenosylcobinamide-GDP and alpha-ribazole to generate adenosylcobalamin (Ado-cobalamin). Also synthesizes adenosylcobalamin 5'-phosphate from adenosylcobinamide-GDP and alpha-ribazole 5'-phosphate. The chain is Adenosylcobinamide-GDP ribazoletransferase from Klebsiella pneumoniae (strain 342).